Here is a 98-residue protein sequence, read N- to C-terminus: Sarcosine oxidase subunit delta (98 aa).

Residues Cys6, Cys9, His59, and Cys63 each coordinate Zn(2+).

The protein belongs to the SoxD family. In terms of assembly, heterotetramer composed of subunits alpha (SoxA), beta (SoxB), gamma (SoxG) and delta (SoxD).

It localises to the cytoplasm. The catalysed reaction is sarcosine + (6S)-5,6,7,8-tetrahydrofolate + O2 = (6R)-5,10-methylene-5,6,7,8-tetrahydrofolate + glycine + H2O2. It catalyses the reaction sarcosine + O2 + H2O = formaldehyde + glycine + H2O2. Functionally, in the presence of tetrahydrofolate, catalyzes the oxidative demethylation of sarcosine to yield glycine, 5,10-methylenetetrahydrofolate and hydrogen peroxide. In the absence of tetrahydrofolate, catalyzes the oxidative demethylation of sarcosine to yield glycine, formaldehyde and hydrogen peroxide. This Corynebacterium sp. (strain P-1) protein is Sarcosine oxidase subunit delta.